Consider the following 266-residue polypeptide: MPKGKKAKGKKVAPAPSVAKKHEVKKVVNPLFEKRPKNFGIGQDIQPKRDLTRFVKWPRYVRLQRHGSILYKRLKVPPAINQFNQALDRQTATQLFKLAHKYRPETKQEKKRRLLARAEQKAAGKGDVPTKRPPVVRAGVNTVTSLVESKKAQLVVIAHDVDPIELVLFLPALCRKMGVPYCIVKGKARLGRLVHRKTCTSVCFTQTNPEDRAALAKLVEAIKTNYNDRYEEIRRHWGGNIMGPKSTARIAKLEKAKGKELATKLG.

Residues 1 to 11 (MPKGKKAKGKK) are compositionally biased toward basic residues. The disordered stretch occupies residues 1–21 (MPKGKKAKGKKVAPAPSVAKK).

Belongs to the eukaryotic ribosomal protein eL8 family. As to quaternary structure, component of the large ribosomal subunit.

The protein resides in the cytoplasm. Its function is as follows. Component of the large ribosomal subunit. The ribosome is a large ribonucleoprotein complex responsible for the synthesis of proteins in the cell. The protein is Large ribosomal subunit protein eL8 (rpl7a) of Ictalurus punctatus (Channel catfish).